Consider the following 834-residue polypeptide: DNA gyrase subunit A (834 aa).

Positions 34-500 (LPDIRDGLKP…ADDIRDIEDI (467 aa)) constitute a Topo IIA-type catalytic domain. The O-(5'-phospho-DNA)-tyrosine intermediate role is filled by Y122. The GyrA-box motif lies at 527 to 533 (QRRGGHG). The interval 810-834 (LSSNENDDEVLSGSEEECSDTVSLR) is disordered. Over residues 814–828 (ENDDEVLSGSEEECS) the composition is skewed to acidic residues.

Belongs to the type II topoisomerase GyrA/ParC subunit family. Heterotetramer, composed of two GyrA and two GyrB chains. In the heterotetramer, GyrA contains the active site tyrosine that forms a transient covalent intermediate with DNA, while GyrB binds cofactors and catalyzes ATP hydrolysis.

The protein resides in the cytoplasm. It carries out the reaction ATP-dependent breakage, passage and rejoining of double-stranded DNA.. A type II topoisomerase that negatively supercoils closed circular double-stranded (ds) DNA in an ATP-dependent manner to modulate DNA topology and maintain chromosomes in an underwound state. Negative supercoiling favors strand separation, and DNA replication, transcription, recombination and repair, all of which involve strand separation. Also able to catalyze the interconversion of other topological isomers of dsDNA rings, including catenanes and knotted rings. Type II topoisomerases break and join 2 DNA strands simultaneously in an ATP-dependent manner. The polypeptide is DNA gyrase subunit A (Chlamydia pneumoniae (Chlamydophila pneumoniae)).